Reading from the N-terminus, the 373-residue chain is Putative glutamate--cysteine ligase 2-2 (373 aa).

This sequence belongs to the glutamate--cysteine ligase type 2 family. YbdK subfamily.

It carries out the reaction L-cysteine + L-glutamate + ATP = gamma-L-glutamyl-L-cysteine + ADP + phosphate + H(+). Functionally, ATP-dependent carboxylate-amine ligase which exhibits weak glutamate--cysteine ligase activity. The sequence is that of Putative glutamate--cysteine ligase 2-2 from Legionella pneumophila (strain Corby).